Consider the following 401-residue polypeptide: Phosphoglycerate kinase (401 aa).

Residues 20-22 (DFN), R35, 58-61 (HLGR), R117, and R154 contribute to the substrate site. Residues K204, G298, E329, and 358–361 (GGDS) each bind ATP.

The protein belongs to the phosphoglycerate kinase family. Monomer.

The protein localises to the cytoplasm. It catalyses the reaction (2R)-3-phosphoglycerate + ATP = (2R)-3-phospho-glyceroyl phosphate + ADP. The protein operates within carbohydrate degradation; glycolysis; pyruvate from D-glyceraldehyde 3-phosphate: step 2/5. This chain is Phosphoglycerate kinase, found in Bifidobacterium longum subsp. infantis (strain ATCC 15697 / DSM 20088 / JCM 1222 / NCTC 11817 / S12).